We begin with the raw amino-acid sequence, 644 residues long: Magnetosome protein MamZ (644 aa).

A major facilitator domain region spans residues 1–427; that stretch reads MPRNAEAPAK…YAAWLLANGI (427 aa). A run of 18 helical transmembrane segments spans residues 22–42, 63–83, 92–112, 113–133, 159–179, 185–205, 254–274, 281–301, 311–331, 337–357, 369–389, 403–423, 440–460, 478–498, 518–538, 553–573, 588–608, and 612–629; these read WNIIYLLMTVGALMAALSISI, ADIQVVAEIVSIVCVGWFGLL, IIALGFLIAVVGAAVSLLSLQ, VGLAFGAAGLVLFYLTRVLLT, LMGNLVFMMVFGGTMLAAIVM, PGGVFLIMCLPLLAGIAGFQL, VIILSLFFSLWCISVSDLVGV, AHAAVMIGLLGLAVLAAVPLW, ISAIGASLSLAALGYIWLGMF, WLVALPLLMVGIGHAGCFVTL, ILGAMVGAGYLVGGLGTVMLV, APFILMGTGKMLVTLYAAWLL, TVDWKPLVFLTAALPFVWLVG, VGFVNRYLGDWAFTFLIISLA, IGLFAFFYAVMHVLAYVALEW, PFILLGLVAFALLIPLAFTSA, LHSATYVINALVALHFILAAN, and GEPYVYAAAVIVLLWYRF. The ferric reductase-like domain stretch occupies residues 488–599; the sequence is WAFTFLIISL…SATYVINALV (112 aa).

This sequence in the N-terminal section; belongs to the major facilitator superfamily.

It is found in the magnetosome membrane. Functionally, required for correct biomineralization of the magnetosome; probably converts and then transports some form of iron. It is partially functionally redundant with MamH. May function with MamX, MamY amd Mms6. This Paramagnetospirillum magneticum (strain ATCC 700264 / AMB-1) (Magnetospirillum magneticum) protein is Magnetosome protein MamZ.